Consider the following 1343-residue polypeptide: DNA-directed RNA polymerase subunit beta (1343 aa).

This sequence belongs to the RNA polymerase beta chain family. As to quaternary structure, the RNAP catalytic core consists of 2 alpha, 1 beta, 1 beta' and 1 omega subunit. When a sigma factor is associated with the core the holoenzyme is formed, which can initiate transcription.

The catalysed reaction is RNA(n) + a ribonucleoside 5'-triphosphate = RNA(n+1) + diphosphate. Its function is as follows. DNA-dependent RNA polymerase catalyzes the transcription of DNA into RNA using the four ribonucleoside triphosphates as substrates. The chain is DNA-directed RNA polymerase subunit beta from Shewanella baltica (strain OS155 / ATCC BAA-1091).